The chain runs to 194 residues: Holliday junction branch migration complex subunit RuvA (194 aa).

The segment at 1–64 is domain I; it reads MIGRITGLLL…EDVHLLFGFM (64 aa). The domain II stretch occupies residues 65-140; the sequence is TEQERALFRQ…KIDPVAILSE (76 aa). A flexible linker region spans residues 140-143; sequence EAGA. The segment at 144 to 194 is domain III; the sequence is AASNVDKDILSALLALGYNGREVNRALEQLSEGVTVSDGIMQSLKFLSKVK.

The protein belongs to the RuvA family. As to quaternary structure, homotetramer. Forms an RuvA(8)-RuvB(12)-Holliday junction (HJ) complex. HJ DNA is sandwiched between 2 RuvA tetramers; dsDNA enters through RuvA and exits via RuvB. An RuvB hexamer assembles on each DNA strand where it exits the tetramer. Each RuvB hexamer is contacted by two RuvA subunits (via domain III) on 2 adjacent RuvB subunits; this complex drives branch migration. In the full resolvosome a probable DNA-RuvA(4)-RuvB(12)-RuvC(2) complex forms which resolves the HJ.

Its subcellular location is the cytoplasm. Functionally, the RuvA-RuvB-RuvC complex processes Holliday junction (HJ) DNA during genetic recombination and DNA repair, while the RuvA-RuvB complex plays an important role in the rescue of blocked DNA replication forks via replication fork reversal (RFR). RuvA specifically binds to HJ cruciform DNA, conferring on it an open structure. The RuvB hexamer acts as an ATP-dependent pump, pulling dsDNA into and through the RuvAB complex. HJ branch migration allows RuvC to scan DNA until it finds its consensus sequence, where it cleaves and resolves the cruciform DNA. This Nitrosomonas eutropha (strain DSM 101675 / C91 / Nm57) protein is Holliday junction branch migration complex subunit RuvA.